The chain runs to 270 residues: NAD kinase (270 aa).

Asp45 (proton acceptor) is an active-site residue. NAD(+)-binding positions include 45-46 (DG), 121-122 (NE), Arg147, Asp149, 160-165 (TAYNKS), and Ala184.

Belongs to the NAD kinase family. A divalent metal cation serves as cofactor.

It is found in the cytoplasm. It carries out the reaction NAD(+) + ATP = ADP + NADP(+) + H(+). Its function is as follows. Involved in the regulation of the intracellular balance of NAD and NADP, and is a key enzyme in the biosynthesis of NADP. Catalyzes specifically the phosphorylation on 2'-hydroxyl of the adenosine moiety of NAD to yield NADP. The protein is NAD kinase of Limosilactobacillus reuteri subsp. reuteri (strain JCM 1112) (Lactobacillus reuteri).